The chain runs to 859 residues: Collagen alpha-1(II) chain (859 aa).

A disordered region spans residues 1 to 607; sequence LQGLPGKDGE…LGQTEKGPDP (607 aa). 4-hydroxyproline is present on residues Pro31 and Pro40. Position 42 is a 3-hydroxyproline (Pro42). A 4-hydroxyproline mark is found at Pro43 and Pro46. Over residues 78 to 121 the composition is skewed to low complexity; it reads ERGSPGAQGLQGPRGLPGTPGTDGPKGATGPAGPNGAQGPPGLQ. Positions 136–147 are enriched in basic and acidic residues; it reads KGDRGDVGEKGP. Low complexity-rich tracts occupy residues 204-220 and 249-277; these read PAGF…PGAK and PTGV…AGRV. Pro279 carries the post-translational modification 3-hydroxyproline. Positions 279–292 are enriched in pro residues; sequence PPGPNGNPGPPGPP. A 4-hydroxyproline mark is found at Pro280, Pro286, and Pro292. The span at 306–321 shows a compositional bias: low complexity; the sequence is DAGPPGRAGDPGLQGP. Basic and acidic residues predominate over residues 487-501; that stretch reads RGDKGETGEAGERGL. The segment at 491–586 is triple-helical region; it reads GETGEAGERG…PGPPGPPGPP (96 aa). Pro516 carries the 3-hydroxyproline modification. A compositionally biased stretch (low complexity) spans 520-529; it reads SGDQGAAGPA. 4-hydroxyproline is present on Pro553. Pro558 carries the post-translational modification 3-hydroxyproline. Pro559 is modified (4-hydroxyproline). The span at 570–586 shows a compositional bias: pro residues; that stretch reads PAGPPGNPGPPGPPGPP. At Pro573 the chain carries 3-hydroxyproline. Residues Pro574 and Pro577 each carry the 4-hydroxyproline modification. Residue Pro579 is modified to 3-hydroxyproline. A 4-hydroxyproline mark is found at Pro580 and Pro583. Pro585 is modified (3-hydroxyproline). At Pro586 the chain carries 4-hydroxyproline. Residues 587 to 613 are nonhelical region (C-terminal); sequence GTGIDMSAFAGLGQTEKGPDPIRYMRA. Residues 614–859 constitute a propeptide, C-terminal propeptide; that stretch reads DEAAGGLRQH…GVDIGPVCFL (246 aa). The region spanning 625–859 is the Fibrillar collagen NC1 domain; that stretch reads VEVDATLKSL…GVDIGPVCFL (235 aa). 3 disulfides stabilise this stretch: Cys655-Cys687, Cys695-Cys857, and Cys765-Cys810. 5 residues coordinate Ca(2+): Asp673, Asn675, Gln676, Cys678, and Asp681. An N-linked (GlcNAc...) asparagine glycan is attached at Asn760.

It belongs to the fibrillar collagen family. As to quaternary structure, homotrimers of alpha 1(II) chains. In terms of processing, contains mostly 4-hydroxyproline. Prolines at the third position of the tripeptide repeating unit (G-X-P) are 4-hydroxylated in some or all of the chains. Post-translationally, contains 3-hydroxyproline at a few sites. This modification occurs on the first proline residue in the sequence motif Gly-Pro-Hyp, where Hyp is 4-hydroxyproline. Lysine residues at the third position of the tripeptide repeating unit (G-X-Y) are 5-hydroxylated in some or all of the chains. In terms of processing, O-glycosylated on hydroxylated lysine residues. The O-linked glycan consists of a Glc-Gal disaccharide.

The protein localises to the secreted. Its subcellular location is the extracellular space. It localises to the extracellular matrix. Functionally, type II collagen is specific for cartilaginous tissues. It is essential for the normal embryonic development of the skeleton, for linear growth and for the ability of cartilage to resist compressive forces. In Gallus gallus (Chicken), this protein is Collagen alpha-1(II) chain.